Reading from the N-terminus, the 324-residue chain is Homoserine kinase (324 aa).

100-110 (PLSSGMGSSAA) serves as a coordination point for ATP.

It belongs to the GHMP kinase family. Homoserine kinase subfamily.

The protein resides in the cytoplasm. The enzyme catalyses L-homoserine + ATP = O-phospho-L-homoserine + ADP + H(+). It functions in the pathway amino-acid biosynthesis; L-threonine biosynthesis; L-threonine from L-aspartate: step 4/5. Catalyzes the ATP-dependent phosphorylation of L-homoserine to L-homoserine phosphate. This chain is Homoserine kinase, found in Chlorobaculum tepidum (strain ATCC 49652 / DSM 12025 / NBRC 103806 / TLS) (Chlorobium tepidum).